Reading from the N-terminus, the 358-residue chain is Fructose-bisphosphate aldolase 3, cytoplasmic (358 aa).

Position 39 (R39) interacts with substrate. The active-site Proton acceptor is E183. The Schiff-base intermediate with dihydroxyacetone-P role is filled by K225. Substrate is bound by residues 266 to 268 (SGG) and R298.

The protein belongs to the class I fructose-bisphosphate aldolase family. Homotetramer.

The protein localises to the cytoplasm. The protein resides in the cytosol. It catalyses the reaction beta-D-fructose 1,6-bisphosphate = D-glyceraldehyde 3-phosphate + dihydroxyacetone phosphate. It functions in the pathway carbohydrate degradation; glycolysis; D-glyceraldehyde 3-phosphate and glycerone phosphate from D-glucose: step 4/4. Fructose-bisphosphate aldolase that plays a key role in glycolysis and gluconeogenesis. This chain is Fructose-bisphosphate aldolase 3, cytoplasmic, found in Oryza sativa subsp. japonica (Rice).